Consider the following 39-residue polypeptide: Natriuretic peptide CnNP-a (39 aa).

A propeptide spanning residues 1-8 (SGSKTAKI) is cleaved from the precursor. An intrachain disulfide couples Cys-12 to Cys-28.

It belongs to the natriuretic peptide family. As to expression, expressed by the venom gland.

The protein resides in the secreted. Functionally, snake venom natriuretic peptide that targets both NPR1 and NPR2. Exhibits hypotensive and vasodepressor activities. The polypeptide is Natriuretic peptide CnNP-a (Cryptophis nigrescens (Eastern small-eyed snake)).